Consider the following 450-residue polypeptide: uncharacterized protein (450 aa).

The next 12 helical transmembrane spans lie at 10-30 (IIVL…LVIA), 53-73 (LGGG…AIAI), 95-115 (TAGN…LFAI), 120-140 (LLPV…SIFN), 148-168 (AVAC…PVGF), 199-219 (LAML…IFIT), 242-262 (IANI…ATFA), 267-287 (TSST…CGIF), 302-322 (LMAM…VINA), 343-363 (IAAL…GSSF), 378-398 (LSFG…AALG), and 428-448 (VVPT…IAAM).

It localises to the cell membrane. This is an uncharacterized protein from Haemophilus influenzae (strain ATCC 51907 / DSM 11121 / KW20 / Rd).